Here is a 435-residue protein sequence, read N- to C-terminus: Putative BTB/POZ domain-containing protein L275 (435 aa).

The region spanning 80 to 149 (YDGYVYINVG…IKGKQNDNHN (70 aa)) is the BTB domain.

This sequence belongs to the mimivirus BTB/WD family.

In Acanthamoeba polyphaga mimivirus (APMV), this protein is Putative BTB/POZ domain-containing protein L275.